The chain runs to 191 residues: Adenylate kinase (191 aa).

Position 12–17 (12–17 (GSGKTT)) interacts with ATP. The segment at 34–63 (STGDLLRAESAKKTERGLLIEKFTSQGELV) is NMP. Residues Thr35, Arg40, 61–63 (ELV), 88–91 (GYPR), and Gln95 contribute to the AMP site. The LID stretch occupies residues 130–136 (GRSRGAD). Arg131 is an ATP binding site. 2 residues coordinate AMP: Arg133 and Arg145. Arg173 contributes to the ATP binding site.

Belongs to the adenylate kinase family. As to quaternary structure, monomer.

The protein localises to the cytoplasm. The catalysed reaction is AMP + ATP = 2 ADP. It participates in purine metabolism; AMP biosynthesis via salvage pathway; AMP from ADP: step 1/1. Functionally, catalyzes the reversible transfer of the terminal phosphate group between ATP and AMP. Plays an important role in cellular energy homeostasis and in adenine nucleotide metabolism. The chain is Adenylate kinase from Helicobacter pylori (strain ATCC 700392 / 26695) (Campylobacter pylori).